We begin with the raw amino-acid sequence, 684 residues long: Agnestins biosynthesis cluster transcription factor AgnL11 (684 aa).

Positions 25–51 (CHFCRTKKLKCDRRFPCSNCRARRLSC) form a DNA-binding region, zn(2)-C6 fungal-type. Residues 76–103 (NEELSENINELKARLQRLEELISVNAEE) are a coiled coil. The segment at 601–644 (KGSASARKDKNPIHGDTDRATPPGSSNLPQHDKSSSSSPAPPVW) is disordered. A compositionally biased stretch (basic and acidic residues) spans 606 to 619 (ARKDKNPIHGDTDR).

It localises to the nucleus. Its function is as follows. Transcription factor that regulates the expression of the gene cluster that mediates the biosynthesis of agnestins, dihydroxy-xanthone metabolites. In Paecilomyces divaricatus (Penicillium divaricatum), this protein is Agnestins biosynthesis cluster transcription factor AgnL11.